Consider the following 315-residue polypeptide: Ester hydrolase C11orf54 homolog (315 aa).

Zn(2+)-binding residues include His-266, His-268, and His-278.

As to quaternary structure, monomer.

The protein resides in the nucleus. Its function is as follows. Exhibits ester hydrolase activity on the substrate p-nitrophenyl acetate. The protein is Ester hydrolase C11orf54 homolog of Bos taurus (Bovine).